Consider the following 37-residue polypeptide: Photosystem I reaction center subunit VIII (37 aa).

A helical membrane pass occupies residues 10 to 30; sequence IFVPLVGLVFPAIAMASLSLY.

The protein belongs to the PsaI family.

The protein resides in the plastid. Its subcellular location is the chloroplast thylakoid membrane. Functionally, may help in the organization of the PsaL subunit. This Gossypium barbadense (Sea Island cotton) protein is Photosystem I reaction center subunit VIII.